Here is a 185-residue protein sequence, read N- to C-terminus: Elongation factor P (185 aa).

It belongs to the elongation factor P family.

The protein resides in the cytoplasm. It functions in the pathway protein biosynthesis; polypeptide chain elongation. Functionally, involved in peptide bond synthesis. Stimulates efficient translation and peptide-bond synthesis on native or reconstituted 70S ribosomes in vitro. Probably functions indirectly by altering the affinity of the ribosome for aminoacyl-tRNA, thus increasing their reactivity as acceptors for peptidyl transferase. The polypeptide is Elongation factor P (Methylobacillus flagellatus (strain ATCC 51484 / DSM 6875 / VKM B-1610 / KT)).